The primary structure comprises 241 residues: Trypsin-10 (241 aa).

The first 13 residues, 1–13 (MKSLIFVLLLGAV), serve as a signal peptide directing secretion. Positions 14–19 (FAEEDK) are cleaved as a propeptide — activation peptide. The 220-residue stretch at 20-239 (IVGGYECTRH…LSGWVRDTMA (220 aa)) folds into the Peptidase S1 domain. Cystine bridges form between C26/C155, C44/C60, C128/C228, C135/C201, C166/C180, and C191/C215. Catalysis depends on charge relay system residues H59 and D103. Residue S195 is the Charge relay system of the active site.

This sequence belongs to the peptidase S1 family.

The protein resides in the secreted. It localises to the extracellular space. The enzyme catalyses Preferential cleavage: Arg-|-Xaa, Lys-|-Xaa.. The protein is Trypsin-10 of Gadus morhua (Atlantic cod).